The primary structure comprises 373 residues: MSEKKINLLDLDRKGLRALFTEMGEKPFRADQLMKWIYHFGVSDFEEMTNINKVLRSKLAERCVIVAPEIASFQKSADGTIKFAINVGQGQEVETVYIPEDDRATLCVSSQVGCALECTFCSTGQQGFNRNLTVSEIVGQIWRVAQFLGFVKTTGERPITNVVMMGMGEPLLNLKNVIPAMDIMLDDFGFSLSKRRVTLSTSGVVPALDILGDSIDVALAVSIHAPNDELRDILVPVNKKYPLAEFLGGIRRYIAKSNANRGRVTVEYVMLDHINDSTEQAHELAKLMKDTPCKVNLIPFNPYPGSPYGRSSNSRIDRFSKVLMEYGFTVIVRKTRGDDIDAACGQLAGDIRDRTKRLAKKRMQENQISVTMD.

The Proton acceptor role is filled by Glu94. A Radical SAM core domain is found at 100–339 (EDDRATLCVS…VIVRKTRGDD (240 aa)). Cys107 and Cys344 are disulfide-bonded. Residues Cys114, Cys118, and Cys121 each contribute to the [4Fe-4S] cluster site. Residues 168-169 (GE), Ser200, 222-224 (SIH), and Asn301 contribute to the S-adenosyl-L-methionine site. The active-site S-methylcysteine intermediate is Cys344.

The protein belongs to the radical SAM superfamily. RlmN family. [4Fe-4S] cluster is required as a cofactor.

The protein resides in the cytoplasm. The catalysed reaction is adenosine(2503) in 23S rRNA + 2 reduced [2Fe-2S]-[ferredoxin] + 2 S-adenosyl-L-methionine = 2-methyladenosine(2503) in 23S rRNA + 5'-deoxyadenosine + L-methionine + 2 oxidized [2Fe-2S]-[ferredoxin] + S-adenosyl-L-homocysteine. It carries out the reaction adenosine(37) in tRNA + 2 reduced [2Fe-2S]-[ferredoxin] + 2 S-adenosyl-L-methionine = 2-methyladenosine(37) in tRNA + 5'-deoxyadenosine + L-methionine + 2 oxidized [2Fe-2S]-[ferredoxin] + S-adenosyl-L-homocysteine. In terms of biological role, specifically methylates position 2 of adenine 2503 in 23S rRNA and position 2 of adenine 37 in tRNAs. m2A2503 modification seems to play a crucial role in the proofreading step occurring at the peptidyl transferase center and thus would serve to optimize ribosomal fidelity. The protein is Dual-specificity RNA methyltransferase RlmN of Shewanella denitrificans (strain OS217 / ATCC BAA-1090 / DSM 15013).